The primary structure comprises 1400 residues: DNA-directed RNA polymerase subunit beta' (1400 aa).

The Zn(2+) site is built by Cys-71, Cys-73, Cys-86, and Cys-89. Mg(2+) is bound by residues Asp-462, Asp-464, and Asp-466. 4 residues coordinate Zn(2+): Cys-811, Cys-885, Cys-892, and Cys-895.

It belongs to the RNA polymerase beta' chain family. The RNAP catalytic core consists of 2 alpha, 1 beta, 1 beta' and 1 omega subunit. When a sigma factor is associated with the core the holoenzyme is formed, which can initiate transcription. It depends on Mg(2+) as a cofactor. Zn(2+) serves as cofactor.

It catalyses the reaction RNA(n) + a ribonucleoside 5'-triphosphate = RNA(n+1) + diphosphate. Its function is as follows. DNA-dependent RNA polymerase catalyzes the transcription of DNA into RNA using the four ribonucleoside triphosphates as substrates. This is DNA-directed RNA polymerase subunit beta' from Brucella suis (strain ATCC 23445 / NCTC 10510).